Reading from the N-terminus, the 295-residue chain is Carbapenem-hydrolyzing beta-lactamase transcriptional activator (295 aa).

One can recognise an HTH lysR-type domain in the interval Leu-5 to Thr-62. Residues Phe-22–Arg-41 constitute a DNA-binding region (H-T-H motif).

The protein belongs to the LysR transcriptional regulatory family.

Functionally, this protein is a positive regulator of gene expression of carbapenem-hydrolyzing beta-lactamase (NmcA). This is Carbapenem-hydrolyzing beta-lactamase transcriptional activator (nmcR) from Enterobacter cloacae.